Reading from the N-terminus, the 237-residue chain is Platelet-aggregating proteinase PA-BJ (237 aa).

The propeptide occupies 1 to 5; the sequence is NSLVI. The 224-residue stretch at 6–229 folds into the Peptidase S1 domain; it reads VVGGRPCKIN…YLPWIESIIA (224 aa). 6 disulfides stabilise this stretch: Cys-12–Cys-144, Cys-31–Cys-47, Cys-79–Cys-236, Cys-123–Cys-191, Cys-155–Cys-170, and Cys-181–Cys-205. N-linked (GlcNAc...) asparagine glycosylation occurs at Asn-25. The O-linked (GalNAc...) serine glycan is linked to Ser-28. Residues His-46 and Asp-91 each act as charge relay system in the active site. The active-site Charge relay system is Ser-185.

It belongs to the peptidase S1 family. Snake venom subfamily. In terms of assembly, monomer. As to expression, expressed by the venom gland.

Its subcellular location is the secreted. Its activity is regulated as follows. Inhibited by PMSF. The amidolytic activity is also inhibited by benzamidine derivatives. Snake venom serine protease that induces platelet aggregation through activation of protease-activated platelet receptors (PAR1/F2R and PAR4/F2RL3). On F2R, the cleavage occurs at Arg41-Ser42 (like thrombin cleavage), and Arg46-Asn47. In normal condition of hemostasis, the cleavage of the Arg41-Ser42 bond liberates a new N-terminus that functions as an agonist. However after envenomation, the cleavage of Arg46-Asn47 bond degrades this potential agonist. This may explain why the snake protease is less potent than thrombin in causing platelet aggregation and release reaction. On F2RL3, a thrombin-like activity has also been proven by calcium release from lung fibroblasts transfected with this receptor. Possesses amidolytic activities. The sequence is that of Platelet-aggregating proteinase PA-BJ from Bothrops jararaca (Jararaca).